The chain runs to 511 residues: MKQGSRSEGARGDIRGYIQKTGERNLYRIKKGLVPNMNVEGHMYVNDKLKHLIDDEIEMYQLNRNSTFLPAVVQIANVSTLPGIVKASIALPDVHAGYGFSIGNVAAFDMSNEKAIISPGGVGFDINCGVRLIRTNLFYEDIKDKQDELAQLLFNNIPVGVGSQGCILCNQDKLDEALCLGMDWCVKEGYAWVEDKLNCEDNGRSFYADSNYVSVRAKKRGITQMGTLGAGNHYAEIQIVDEIYDKRSAKLMGIEKKNQVCIMIHSGSRGLGHQIATDALIEMEKSMTKYKIDVIDKQLACTPIHSKEGQNYLKAMGSACNFAWINRSSMTFLARQTFAKIFNQSPDDLDMHVIYDISHNIAKMEDHLVDGKMKKLLVHRKGSTRAFPPFHPAVPLDYQYCGQPILIGGTMGTYSYVLTGTDKAMETTFGSTCHGAGRALSRNKSRNTLNYMDVLQKMKEENISIRVASPKLIMEEAPESYKNVSEVVNTCHEAGISNKCFRLKPVAVIKG.

Mn(2+) contacts are provided by Asp-125, Cys-128, His-233, His-265, and His-359. 232 to 236 provides a ligand contact to GMP; the sequence is NHYAE. GMP-binding positions include 359–360, 408–411, Ser-415, 434–437, and Lys-510; these read HN, GGTM, and HGAG. Residue His-434 is the GMP-histidine intermediate of the active site.

Belongs to the RtcB family. In terms of assembly, catalytic component of the tRNA-splicing ligase complex. It depends on Mn(2+) as a cofactor.

It catalyses the reaction a 3'-end 3'-phospho-ribonucleotide-RNA + a 5'-end dephospho-ribonucleoside-RNA + GTP = a ribonucleotidyl-ribonucleotide-RNA + GMP + diphosphate. It carries out the reaction a 3'-end 2',3'-cyclophospho-ribonucleotide-RNA + a 5'-end dephospho-ribonucleoside-RNA + GTP + H2O = a ribonucleotidyl-ribonucleotide-RNA + GMP + diphosphate + H(+). Catalytic subunit of the tRNA-splicing ligase complex that acts by directly joining spliced tRNA halves to mature-sized tRNAs by incorporating the precursor-derived splice junction phosphate into the mature tRNA as a canonical 3',5'-phosphodiester. May act as an RNA ligase with broad substrate specificity, and may function toward other RNAs. The sequence is that of RNA-splicing ligase RtcB homolog from Plasmodium knowlesi (strain H).